The following is a 287-amino-acid chain: Coatomer subunit epsilon-1 (287 aa).

It belongs to the COPE family. Oligomeric complex that consists of at least the alpha, beta, beta', gamma, delta, epsilon and zeta subunits.

It localises to the cytoplasm. Its subcellular location is the golgi apparatus membrane. The protein resides in the cytoplasmic vesicle. It is found in the COPI-coated vesicle membrane. Its function is as follows. The coatomer is a cytosolic protein complex that binds to dilysine motifs and reversibly associates with Golgi non-clathrin-coated vesicles, which further mediate biosynthetic protein transport from the ER, via the Golgi up to the trans Golgi network. The coatomer complex is required for budding from Golgi membranes, and is essential for the retrograde Golgi-to-ER transport of dilysine-tagged proteins. This chain is Coatomer subunit epsilon-1 (COPE1), found in Oryza sativa subsp. japonica (Rice).